The primary structure comprises 364 residues: Guanine nucleotide-binding protein alpha-6 subunit (364 aa).

The segment at 1 to 29 (MGAGATGLRGARLSPEERANSSKSRAIDR) is disordered. G2 carries N-myristoyl glycine lipidation. Basic and acidic residues predominate over residues 14 to 29 (SPEERANSSKSRAIDR). Residues 40–363 (NRFKILLLGT…NENLRSAGLH (324 aa)) form the G-alpha domain. A G1 motif region spans residues 43 to 56 (KILLLGTAESGKST). GTP contacts are provided by residues 48-55 (GTAESGKS), 186-192 (VHCRIST), 211-215 (DVGGQ), 280-283 (NKYD), and A335. Mg(2+) is bound by residues S55 and T192. Residues 184–192 (DIVHCRIST) are G2 motif. The tract at residues 207–216 (FKMVDVGGQR) is G3 motif. The interval 276-283 (VLFLNKYD) is G4 motif. Positions 333-338 (TTATDT) are G5 motif.

It belongs to the G-alpha family. In terms of assembly, g proteins are composed of 3 units; alpha, beta and gamma. The alpha chain contains the guanine nucleotide binding site.

In terms of biological role, guanine nucleotide-binding proteins (G proteins) are involved as modulators or transducers in various transmembrane signaling systems. The protein is Guanine nucleotide-binding protein alpha-6 subunit (gpa-6) of Caenorhabditis elegans.